We begin with the raw amino-acid sequence, 82 residues long: Small ribosomal subunit protein uS17c (82 aa).

Belongs to the universal ribosomal protein uS17 family. As to quaternary structure, part of the 30S ribosomal subunit.

It is found in the plastid. The protein resides in the chloroplast. Functionally, one of the primary rRNA binding proteins, it binds specifically to the 5'-end of 16S ribosomal RNA. The chain is Small ribosomal subunit protein uS17c (rps17) from Cyanidioschyzon merolae (strain NIES-3377 / 10D) (Unicellular red alga).